The sequence spans 660 residues: Bifunctional polymyxin resistance protein ArnA (660 aa).

Positions 1 to 304 (MKAVIFAYHD…TLGLVAGARL (304 aa)) are formyltransferase ArnAFT. The Proton donor; for formyltransferase activity role is filled by His-104. (6R)-10-formyltetrahydrofolate contacts are provided by residues Arg-114 and 136 to 140 (VKRAD). Residues 314 to 660 (RRIRVLILGV…RSVDIAERAS (347 aa)) form a dehydrogenase ArnADH region. Residues Asp-347 and 368-369 (DI) each bind NAD(+). UDP-alpha-D-glucuronate is bound by residues Ala-393, Tyr-398, and 432–433 (TS). Glu-434 (proton acceptor; for decarboxylase activity) is an active-site residue. Residues Arg-460, Asn-492, 526–535 (KLIDGGQQKR), and Tyr-613 each bind UDP-alpha-D-glucuronate. Residue Arg-619 is the Proton donor; for decarboxylase activity of the active site.

The protein in the N-terminal section; belongs to the Fmt family. UDP-L-Ara4N formyltransferase subfamily. In the C-terminal section; belongs to the NAD(P)-dependent epimerase/dehydratase family. UDP-glucuronic acid decarboxylase subfamily. Homohexamer, formed by a dimer of trimers.

The catalysed reaction is UDP-alpha-D-glucuronate + NAD(+) = UDP-beta-L-threo-pentopyranos-4-ulose + CO2 + NADH. It carries out the reaction UDP-4-amino-4-deoxy-beta-L-arabinose + (6R)-10-formyltetrahydrofolate = UDP-4-deoxy-4-formamido-beta-L-arabinose + (6S)-5,6,7,8-tetrahydrofolate + H(+). Its pathway is nucleotide-sugar biosynthesis; UDP-4-deoxy-4-formamido-beta-L-arabinose biosynthesis; UDP-4-deoxy-4-formamido-beta-L-arabinose from UDP-alpha-D-glucuronate: step 1/3. The protein operates within nucleotide-sugar biosynthesis; UDP-4-deoxy-4-formamido-beta-L-arabinose biosynthesis; UDP-4-deoxy-4-formamido-beta-L-arabinose from UDP-alpha-D-glucuronate: step 3/3. It functions in the pathway bacterial outer membrane biogenesis; lipopolysaccharide biosynthesis. Its function is as follows. Bifunctional enzyme that catalyzes the oxidative decarboxylation of UDP-glucuronic acid (UDP-GlcUA) to UDP-4-keto-arabinose (UDP-Ara4O) and the addition of a formyl group to UDP-4-amino-4-deoxy-L-arabinose (UDP-L-Ara4N) to form UDP-L-4-formamido-arabinose (UDP-L-Ara4FN). The modified arabinose is attached to lipid A and is required for resistance to polymyxin and cationic antimicrobial peptides. The polypeptide is Bifunctional polymyxin resistance protein ArnA (arnA) (Salmonella typhimurium (strain LT2 / SGSC1412 / ATCC 700720)).